The chain runs to 177 residues: Large ribosomal subunit protein uL6 (177 aa).

The protein belongs to the universal ribosomal protein uL6 family. As to quaternary structure, part of the 50S ribosomal subunit.

In terms of biological role, this protein binds to the 23S rRNA, and is important in its secondary structure. It is located near the subunit interface in the base of the L7/L12 stalk, and near the tRNA binding site of the peptidyltransferase center. This chain is Large ribosomal subunit protein uL6, found in Rhizobium etli (strain ATCC 51251 / DSM 11541 / JCM 21823 / NBRC 15573 / CFN 42).